Here is a 334-residue protein sequence, read N- to C-terminus: MKEIIEKLAKFENLSGVEMTDVIERIVTGRVTEAQIASLLLALKMKGETPEERTAIAQVMRGHAQHIPTEIHDAMDNCGTGGDKSFSFNISTTAAFVLAGGGIHMAKHGNRSISSKSGSADVLEALGINLDLKPAELGKVFDKTGIVFLFAKNMHPAMKYIMPARLELGIPTIMNLTGPLIHPMALETQLLGISRPELLESTAQVLKNMGRKRAIVVAGPEGLDEAGLNGTTKIALLENGEISLSSFTPEDLGMEGYAMEDIRGGNAQENAEILLSVLKNEASPFLETTVLNAGLGFYANGKIDSIKEGVALARQVIARGKALEKLRLLQEYQK.

5-phospho-alpha-D-ribose 1-diphosphate is bound by residues G79, 82–83 (GD), S87, 89–92 (NIST), 107–115 (KHGNRSISS), and S119. G79 is an anthranilate binding site. A Mg(2+)-binding site is contributed by S91. Anthranilate is bound at residue N110. Residue R165 coordinates anthranilate. Residues D224 and E225 each contribute to the Mg(2+) site.

Belongs to the anthranilate phosphoribosyltransferase family. Homodimer. It depends on Mg(2+) as a cofactor.

It catalyses the reaction N-(5-phospho-beta-D-ribosyl)anthranilate + diphosphate = 5-phospho-alpha-D-ribose 1-diphosphate + anthranilate. It participates in amino-acid biosynthesis; L-tryptophan biosynthesis; L-tryptophan from chorismate: step 2/5. In terms of biological role, catalyzes the transfer of the phosphoribosyl group of 5-phosphorylribose-1-pyrophosphate (PRPP) to anthranilate to yield N-(5'-phosphoribosyl)-anthranilate (PRA). This chain is Anthranilate phosphoribosyltransferase, found in Streptococcus pneumoniae (strain 70585).